Here is a 945-residue protein sequence, read N- to C-terminus: Kinesin-like protein KIN-UA (945 aa).

The disordered stretch occupies residues 1 to 54 (MAANGRASVRPVERHGAPPRPAGRSRSVAPPSRRPSPSPSRARPAAADNDGGSD). Residues 22 to 31 (AGRSRSVAPP) show a composition bias toward low complexity. The 343-residue stretch at 57–399 (RVRVAVRLRP…IMFGQRAMKI (343 aa)) folds into the Kinesin motor domain. Position 142-149 (142-149 (GQTGTGKT)) interacts with ATP. A D-BOX motif is present at residues 369–377 (RTSLIVTIG). Residues 415–644 (YKKVEHEVDH…ILRLKQSLAD (230 aa)) are a coiled coil. ARM repeat units follow at residues 683-722 (RSNI…NLAA), 724-764 (DVNQ…NLAM), 766-806 (GSNQ…NLCG), and 808-847 (EKLH…NFAK).

The protein belongs to the TRAFAC class myosin-kinesin ATPase superfamily. Kinesin family. Ungrouped subfamily.

It localises to the cytoplasm. It is found in the cytoskeleton. The protein is Kinesin-like protein KIN-UA of Oryza sativa subsp. japonica (Rice).